Consider the following 239-residue polypeptide: Ribosomal RNA small subunit methyltransferase G (239 aa).

Residues glycine 77, phenylalanine 82, 128-129 (AE), and arginine 147 contribute to the S-adenosyl-L-methionine site.

This sequence belongs to the methyltransferase superfamily. RNA methyltransferase RsmG family.

The protein localises to the cytoplasm. Functionally, specifically methylates the N7 position of guanine in position 535 of 16S rRNA. The protein is Ribosomal RNA small subunit methyltransferase G of Bacillus anthracis (strain A0248).